A 128-amino-acid chain; its full sequence is Fruiting body differentiation protein 16 (128 aa).

An N-terminal signal peptide occupies residues 1-19 (MLFSHIVFVALSVFGLVQA).

In terms of biological role, plays a role in the regulation of fruiting body development. The polypeptide is Fruiting body differentiation protein 16 (Flammulina velutipes (Agaricus velutipes)).